The sequence spans 225 residues: Small ribosomal subunit protein uS3 (225 aa).

The KH type-2 domain occupies 18-87; that stretch reads VDEYLAKQFY…NPQITVTSVE (70 aa).

Belongs to the universal ribosomal protein uS3 family. In terms of assembly, part of the 30S ribosomal subunit.

Its function is as follows. Binds the lower part of the 30S subunit head. This chain is Small ribosomal subunit protein uS3, found in Sulfurisphaera tokodaii (strain DSM 16993 / JCM 10545 / NBRC 100140 / 7) (Sulfolobus tokodaii).